Consider the following 459-residue polypeptide: Ammonium transporter Rh type B (459 aa).

Residues 1–10 (MAESTNLRLR) are Cytoplasmic-facing. The chain crosses the membrane as a helical span at residues 11-31 (LPLICIILEVILIILFGVLVE). The Extracellular segment spans residues 32–58 (YNDDTDAKKWNKNNSTDPATNEFYYRY). N-linked (GlcNAc...) asparagine glycosylation is present at Asn45. A helical membrane pass occupies residues 59 to 79 (PSFQDVHVMIFVGFGFLMTFL). Over 80–87 (QRYGFSSM) the chain is Cytoplasmic. Residues 88–108 (GFNFLIAAFSLQWATLMQGFF) form a helical membrane-spanning segment. Residues 109-121 (HGMHHGKIHVGVT) lie on the Extracellular side of the membrane. A helical transmembrane segment spans residues 122 to 142 (SMINADFCTGAVLISFGAVLG). Over 143 to 149 (KTSPVQL) the chain is Cytoplasmic. Residues 150 to 170 (LVMAILEVTLFAVNEYILLSI) traverse the membrane as a helical segment. The Extracellular portion of the chain corresponds to 171 to 176 (LGANDA). Residues 177–197 (GGSMTIHTFGAYFGLMVTRIL) form a helical membrane-spanning segment. Topologically, residues 198-216 (HRPNLDKSKHKNSSVYHSD) are cytoplasmic. Residues 217–237 (LFAMIGTIFLWMFWPSFNSAI) traverse the membrane as a helical segment. The Extracellular portion of the chain corresponds to 238–248 (TQYGDPQHRTA). A helical membrane pass occupies residues 249–269 (ANTYYSLAACTLATFGFSSLV). Over 270 to 274 (NPEGK) the chain is Cytoplasmic. A helical transmembrane segment spans residues 275–295 (LDMVHIQNAALAGGVAVGTAG). A topological domain (extracellular) is located at residue Glu296. Residues 297–317 (MMLTPFGSMIVGFLAGTISVL) form a helical membrane-spanning segment. Residues 318–340 (GYKYLTPFMESKLKIQDTCGIHN) are Cytoplasmic-facing. Residues 341–361 (LHGMPGILGAIVGAVTAALAS) traverse the membrane as a helical segment. The Extracellular portion of the chain corresponds to 362-392 (RDVYGNGLDKVFLEAADNSQWSAQTKGGFQA). A helical transmembrane segment spans residues 393-413 (ISLAVTLGIALIGGLITGFLL). Topologically, residues 414-459 (KLPIYGTPPDTQCFEDAVYWEVPGEEEDHHELNEVSTQNEVEKLNS) are cytoplasmic. Residues 440–459 (EDHHELNEVSTQNEVEKLNS) are disordered.

The protein belongs to the ammonium transporter (TC 2.A.49) family. Rh subfamily.

It is found in the basolateral cell membrane. The protein resides in the cytoplasmic vesicle membrane. In terms of biological role, functions as an ammonia transporter. May play a role in the elimination of ammonia in the gill. The polypeptide is Ammonium transporter Rh type B (rhbg) (Danio rerio (Zebrafish)).